A 171-amino-acid polypeptide reads, in one-letter code: Non-specific lipid transfer protein GPI-anchored 19 (171 aa).

Positions 1–18 are cleaved as a signal peptide; sequence MILAILALVIATFLYGGA. Cystine bridges form between Cys25/Cys66, Cys35/Cys50, Cys51/Cys93, and Cys64/Cys103. Residues Asn72 and Asn82 are each glycosylated (N-linked (GlcNAc...) asparagine). A disordered region spans residues 113–149; that stretch reads LPANTPVGSPRSAPSPSGTTSPANTPSGSKKFPLSNE. The span at 118–141 shows a compositional bias: low complexity; sequence PVGSPRSAPSPSGTTSPANTPSGS. The GPI-anchor amidated serine moiety is linked to residue Ser147. A glycan (N-linked (GlcNAc...) asparagine) is linked at Asn148. The propeptide at 148–171 is removed in mature form; the sequence is NESSSKSNVIILSFVSIALVLAII.

This sequence belongs to the plant LTP family.

The protein resides in the cell membrane. Its function is as follows. Probable lipid transfer protein. The chain is Non-specific lipid transfer protein GPI-anchored 19 from Arabidopsis thaliana (Mouse-ear cress).